Here is a 344-residue protein sequence, read N- to C-terminus: Dihydroorotase (344 aa).

Residues histidine 14 and histidine 16 each contribute to the Zn(2+) site. Substrate contacts are provided by residues 16–18 (HLR) and asparagine 42. Residues lysine 100, histidine 137, and histidine 175 each contribute to the Zn(2+) site. Lysine 100 is subject to N6-carboxylysine. Histidine 137 is a substrate binding site. Leucine 220 is a substrate binding site. Residue aspartate 248 coordinates Zn(2+). Aspartate 248 is an active-site residue. 2 residues coordinate substrate: histidine 252 and alanine 264.

Belongs to the metallo-dependent hydrolases superfamily. DHOase family. Class II DHOase subfamily. In terms of assembly, homodimer. Requires Zn(2+) as cofactor.

The enzyme catalyses (S)-dihydroorotate + H2O = N-carbamoyl-L-aspartate + H(+). It participates in pyrimidine metabolism; UMP biosynthesis via de novo pathway; (S)-dihydroorotate from bicarbonate: step 3/3. In terms of biological role, catalyzes the reversible cyclization of carbamoyl aspartate to dihydroorotate. This chain is Dihydroorotase, found in Ralstonia nicotianae (strain ATCC BAA-1114 / GMI1000) (Ralstonia solanacearum).